Here is a 542-residue protein sequence, read N- to C-terminus: Peptide chain release factor 3 (542 aa).

The tr-type G domain maps to 14–283 (ELRRNFAIIS…YFLEYALKPG (270 aa)). Residues 23–30 (SHPDAGKT), 91–95 (DTPGH), and 145–148 (NKLD) each bind GTP.

This sequence belongs to the TRAFAC class translation factor GTPase superfamily. Classic translation factor GTPase family. PrfC subfamily.

Its subcellular location is the cytoplasm. Increases the formation of ribosomal termination complexes and stimulates activities of RF-1 and RF-2. It binds guanine nucleotides and has strong preference for UGA stop codons. It may interact directly with the ribosome. The stimulation of RF-1 and RF-2 is significantly reduced by GTP and GDP, but not by GMP. In Nostoc punctiforme (strain ATCC 29133 / PCC 73102), this protein is Peptide chain release factor 3.